The following is a 98-amino-acid chain: Large ribosomal subunit protein uL23 (98 aa).

Belongs to the universal ribosomal protein uL23 family. In terms of assembly, part of the 50S ribosomal subunit. Contacts protein L29, and trigger factor when it is bound to the ribosome.

In terms of biological role, one of the early assembly proteins it binds 23S rRNA. One of the proteins that surrounds the polypeptide exit tunnel on the outside of the ribosome. Forms the main docking site for trigger factor binding to the ribosome. The sequence is that of Large ribosomal subunit protein uL23 from Roseobacter denitrificans (strain ATCC 33942 / OCh 114) (Erythrobacter sp. (strain OCh 114)).